The following is a 411-amino-acid chain: Putative competence-damage inducible protein (411 aa).

It belongs to the CinA family.

The chain is Putative competence-damage inducible protein from Caldicellulosiruptor bescii (strain ATCC BAA-1888 / DSM 6725 / KCTC 15123 / Z-1320) (Anaerocellum thermophilum).